A 594-amino-acid polypeptide reads, in one-letter code: Apolipoprotein N-acyltransferase (594 aa).

The span at Met-1 to Glu-29 shows a compositional bias: acidic residues. Positions Met-1–Ile-48 are disordered. Topologically, residues Met-1 to Cys-67 are cytoplasmic. The segment covering Pro-30–Ser-40 has biased composition (basic and acidic residues). A helical membrane pass occupies residues Ala-68–Ile-87. Residues Gly-88–Gly-116 lie on the Extracellular side of the membrane. A helical transmembrane segment spans residues Tyr-117 to Ser-134. Residues Gly-135 to Gly-138 are Cytoplasmic-facing. A helical transmembrane segment spans residues Ala-139–Ala-160. Residues Val-161–Ala-221 are Extracellular-facing. The chain crosses the membrane as a helical span at residues Val-222 to Trp-239. Residues Trp-240–Pro-251 lie on the Cytoplasmic side of the membrane. The helical transmembrane segment at Ala-252–Leu-269 threads the bilayer. The Extracellular segment spans residues Val-270–Gly-554. The CN hydrolase domain occupies Val-287–Leu-543. Glu-340 serves as the catalytic Proton acceptor. Residue Lys-405 is part of the active site. Cys-455 (nucleophile) is an active-site residue. A helical membrane pass occupies residues Pro-555–Ala-572. The Cytoplasmic portion of the chain corresponds to Ile-573–Arg-594.

This sequence belongs to the CN hydrolase family. Apolipoprotein N-acyltransferase subfamily. Interacts with Ppm1 (AC A0QZ12) upon coexpression in E.coli, which increases the PPM synthase activity of Ppm1.

The protein resides in the cell membrane. The enzyme catalyses N-terminal S-1,2-diacyl-sn-glyceryl-L-cysteinyl-[lipoprotein] + a glycerophospholipid = N-acyl-S-1,2-diacyl-sn-glyceryl-L-cysteinyl-[lipoprotein] + a 2-acyl-sn-glycero-3-phospholipid + H(+). It functions in the pathway protein modification; lipoprotein biosynthesis (N-acyl transfer). Its function is as follows. Catalyzes the phospholipid dependent N-acylation of the N-terminal cysteine of apolipoprotein, the last step in lipoprotein maturation. Can transfer a number of fatty acids (C16 and C19, palmitic and probably tuberculostearic acids respectively are shown). Enhances the polyprenol monophosphomannose (PPM) synthase activity of Ppm1 (AC A0QZ12) without itself having PPM synthase catalytic activity. The sequence is that of Apolipoprotein N-acyltransferase from Mycolicibacterium smegmatis (strain ATCC 700084 / mc(2)155) (Mycobacterium smegmatis).